Consider the following 336-residue polypeptide: Cytochrome P450 monooxygenase lcsN (336 aa).

Heme is bound at residue C271.

This sequence belongs to the cytochrome P450 family. Requires heme as cofactor.

It participates in secondary metabolite biosynthesis. In terms of biological role, cytochrome P450 monooxygenase; part of the gene cluster that mediates the biosynthesis of the lipopeptide antibiotics leucinostatins that show extensive biological activities, including antimalarial, antiviral, antibacterial, antifungal, and antitumor activities, as well as phytotoxic. Leucinostatin A contains nine amino acid residues, including the unusual amino acid 4-methyl-L-proline (MePro), 2-amino-6-hydroxy-4-methyl-8-oxodecanoic acid (AHyMeOA), 3-hydroxyleucine (HyLeu), alpha-aminoisobutyric acid (AIB), beta-Ala, a 4-methylhex-2-enoic acid at the N-terminus as well as a N1,N1-dimethylpropane-1,2-diamine (DPD) at the C-terminus. The biosynthesis of leucinostatins is probably initiated with the assembly of 4-methylhex-2-enoic acid by a reducing PKS. Two reducing polyketide synthases, lcsB and lcsC, have been identified in the cluster and it is not clear which is the one that assembles 4-methylhex-2-enoic acid since both contain KS, AT, DH, cMT, ER, KR and ACP domains. The polyketide residue might be transferred to the NRPS lcsA, mediated by two additional enzymes, the acyl-CoA ligase lcsD and the thioesterase lcsE. The linear polyketide carboxylic acid, which is released from PKS, is converted to a CoA thioester by lcsD, and then lcsE hydrolyzes the thiol bond and shuttles the polyketide intermediate to lcsA. The C domain of the first module catalyzed the condensation of 4-methylhex-2-enoic acid and MePro carried by domain A1, followed by successive condensations of nine amino acids to trigger the elongation of the linear peptide. A5 and A6 domains of lcsA are proposed to incorporate leucine, A2 AHyMeOA, and A3 incorporates HyLeu. A4, A7 and A8 incorporate AIB. The AHyMeOA in leucinostatin A activated by the A2 might be produced by the second PKS (lcsB or lcsC) present within the cluster. The MePro is probably produced via leucine cyclization and may originate from a separate pathway, independent of the cluster. Another nonproteinogenic amino acid, beta-Ala, could be produced by an aspartic acid decarboxylase also localized outside of the cluster. Two candidates are VFPBJ_01400 and VFPBJ_10476. The final peptide scaffold may be released by the NAD(P)H-dependent thioester reductase (TE) at the C-terminal region of lcsA. Transamination of the lcsA product by the transaminase lcsP may produce DPD at the C-terminus. Further hydroxylation steps performed alternatively by the cytochrome P450 monooxygenases lcsI, lcsK and lcsN then yield the non-methylated leucinostatins precursor. It is also possible that leucines can be hydroxylated prior to their incorporation into the peptide. Varying extents of methylation then lead to the formation of leucinostatins A and B. This chain is Cytochrome P450 monooxygenase lcsN, found in Purpureocillium lilacinum (Paecilomyces lilacinus).